The following is a 431-amino-acid chain: Cyclin-B2-4 (431 aa).

A disordered region spans residues 1-30 (MGGSDENRHGVIGPMNRQQGGLRGGKVIPT).

It belongs to the cyclin family. Cyclin AB subfamily. Interacts with SMR11.

The polypeptide is Cyclin-B2-4 (CYCB2-4) (Arabidopsis thaliana (Mouse-ear cress)).